The chain runs to 447 residues: tRNA-2-methylthio-N(6)-dimethylallyladenosine synthase (447 aa).

In terms of domain architecture, MTTase N-terminal spans 4–120 (RSFFIKTYGC…INELLERSRT (117 aa)). [4Fe-4S] cluster-binding residues include Cys-13, Cys-49, Cys-83, Cys-161, Cys-165, and Cys-168. Positions 147–382 (HEGEFRKFVT…QARQDEIGLE (236 aa)) constitute a Radical SAM core domain. The TRAM domain maps to 385–446 (QEYIGTTQEV…QHSLRGSIVE (62 aa)).

Belongs to the methylthiotransferase family. MiaB subfamily. As to quaternary structure, monomer. [4Fe-4S] cluster serves as cofactor.

The protein localises to the cytoplasm. It carries out the reaction N(6)-dimethylallyladenosine(37) in tRNA + (sulfur carrier)-SH + AH2 + 2 S-adenosyl-L-methionine = 2-methylsulfanyl-N(6)-dimethylallyladenosine(37) in tRNA + (sulfur carrier)-H + 5'-deoxyadenosine + L-methionine + A + S-adenosyl-L-homocysteine + 2 H(+). Catalyzes the methylthiolation of N6-(dimethylallyl)adenosine (i(6)A), leading to the formation of 2-methylthio-N6-(dimethylallyl)adenosine (ms(2)i(6)A) at position 37 in tRNAs that read codons beginning with uridine. This Desulfotalea psychrophila (strain LSv54 / DSM 12343) protein is tRNA-2-methylthio-N(6)-dimethylallyladenosine synthase.